Consider the following 846-residue polypeptide: Selenocysteine insertion sequence-binding protein 2 (846 aa).

2 stretches are compositionally biased toward basic and acidic residues: residues arginine 151–aspartate 165 and proline 206–phenylalanine 215. Disordered stretches follow at residues arginine 151–serine 246, threonine 266–leucine 288, threonine 321–glutamine 440, alanine 448–valine 467, and valine 475–threonine 613. The residue at position 220 (serine 220) is a Phosphoserine. Polar residues-rich tracts occupy residues serine 220–glutamine 232, alanine 272–leucine 288, and threonine 321–serine 342. The short motif at lysine 370 to lysine 380 is the Nuclear localization signal element. Polar residues predominate over residues lysine 417–phenylalanine 428. Over residues isoleucine 527–glutamine 536 the composition is skewed to basic and acidic residues. A compositionally biased stretch (polar residues) spans serine 542–aspartate 551. Residues leucine 666–isoleucine 687 are RNA-binding. The disordered stretch occupies residues arginine 774 to alanine 804. Positions proline 783–glutamine 792 are enriched in pro residues.

Ubiquitous.

It localises to the cytoplasm. Its subcellular location is the nucleus. In terms of biological role, mRNA-binding protein that binds to the SECIS (selenocysteine insertion sequence) element present in the 3'-UTR of mRNAs encoding selenoproteins and facilitates the incorporation of the rare amino acid selenocysteine. Insertion of selenocysteine at UGA codons is mediated by SECISBP2 and EEFSEC: SECISBP2 (1) specifically binds the SECIS sequence once the 80S ribosome encounters an in-frame UGA codon and (2) contacts the RPS27A/eS31 of the 40S ribosome before ribosome stalling. (3) GTP-bound EEFSEC then delivers selenocysteinyl-tRNA(Sec) to the 80S ribosome and adopts a preaccommodated state conformation. (4) After GTP hydrolysis, EEFSEC dissociates from the assembly, selenocysteinyl-tRNA(Sec) accommodates, and peptide bond synthesis and selenoprotein elongation occur. This chain is Selenocysteine insertion sequence-binding protein 2 (Secisbp2), found in Rattus norvegicus (Rat).